A 321-amino-acid chain; its full sequence is Putative membrane-bound redox modulator Alx (321 aa).

Over 1 to 6 (MNTVGT) the chain is Periplasmic. The chain crosses the membrane as a helical span at residues 7 to 27 (PLLWGGFAVVVAIMLAIDLLL). The Cytoplasmic portion of the chain corresponds to 28 to 43 (QGRRGAHAMTMKQAAA). The chain crosses the membrane as a helical span at residues 44–64 (WSLVWVTLSLLFNAAFWWYLV). Topologically, residues 65–89 (QTEGRAVADPQALAFLTGYLIEKSL) are periplasmic. A helical transmembrane segment spans residues 90 to 110 (AVDNVFVWLMLFSYFSVPAAL). The Cytoplasmic portion of the chain corresponds to 111 to 113 (QRR). A helical transmembrane segment spans residues 114–134 (VLVYGVLGAIVLRTIMIFTGS). Tryptophan 135 is a topological domain (periplasmic). The helical transmembrane segment at 136–156 (LISQFDWILYIFGAFLLFTGV) threads the bilayer. Residues 157–198 (KMALAHEDESGIGDKPLVRWLRGHLRMTDTIDNEHFFVRKNG) lie on the Cytoplasmic side of the membrane. A helical transmembrane segment spans residues 199–219 (LLYATPLMLVLILVELSDVIF). Residues 220-225 (AVDSIP) are Periplasmic-facing. Residues 226-246 (AIFAVTTDPFIVLTSNLFAIL) form a helical membrane-spanning segment. The Cytoplasmic portion of the chain corresponds to 247–261 (GLRAMYFLLAGVAER). Residues 262 to 282 (FSMLKYGLAVILVFIGIKMLI) traverse the membrane as a helical segment. The Periplasmic portion of the chain corresponds to 283-286 (VDFY). A helical membrane pass occupies residues 287-307 (HIPIAVSLGVVFGILVMTFII). Over 308–321 (NAWVNYRHDKQRVG) the chain is Cytoplasmic.

The protein belongs to the TerC family.

It is found in the cell inner membrane. Has been proposed to be a redox modulator. The chain is Putative membrane-bound redox modulator Alx (alx) from Escherichia coli O157:H7.